The sequence spans 234 residues: Core atranone cluster (CAC) protein 1 (234 aa).

Its pathway is mycotoxin biosynthesis. Part of the core atranone cluster (CAC) which products are predicted to catalyze most or all steps of mycotoxin atranone synthesis, starting from geranylgeranyl pyrophosphate (GGPP). The initial cyclization of GGPP to dolabellane is probably performed by the terpene cyclase ATR13. The Baeyer-Villiger oxidation near the end of the atranone synthesis, which converts atranones D and E to atranones F and G is predicted to be catalyzed by the monooxygenase ATR8. Of the CAC's other predicted gene products, the reducing PKS ATR6 might synthesize a polyketide chain. This polyketide is probably transferred onto the atranone backbone by the polyketide transferase ATR5. Other predicted CAC products include 4 oxygenases (ATR2, ATR3, ATR4, and ATR14), 3 short-chain reductases (ATR7, ATR9, and ATR10), and a methyltransferase (ATR12). These may all be involved in the various steps of atranone biosynthesis, although their specific roles must await experimental determination. The protein is Core atranone cluster (CAC) protein 1 of Stachybotrys chlorohalonatus (strain IBT 40285).